The chain runs to 87 residues: Cytochrome c6 (87 aa).

Residues Cys14, Cys17, His18, and Met58 each contribute to the heme c site.

This sequence belongs to the cytochrome c family. PetJ subfamily. In terms of assembly, monomer. Post-translationally, binds 1 heme c group covalently per subunit.

It is found in the cellular thylakoid lumen. Functions as an electron carrier between membrane-bound cytochrome b6-f and photosystem I in oxygenic photosynthesis. The polypeptide is Cytochrome c6 (petJ) (Aphanizomenon flos-aquae).